The following is a 226-amino-acid chain: MPLSEHDLAAIRLTLELASLTTVLLLVVGTPIAWWLARTRSRLKGAIGAVVALPLVLPPTVLGFYLLVTMGPHGPIGQLTQFLGLGTLPFTFAGLVVASVFYSLPFVVQPLQNAFEAIGERPLEVASTLRAGPWDTFFTVVVPLARPGFITAAILGFAHTVGEFGVVLMIGGNIPEKTRTVAVQIFDHVEAMEYAQAHWLAGGMVLFSFLVLFALYSSRRFKAGLS.

Residues 11 to 217 (IRLTLELASL…SFLVLFALYS (207 aa)) enclose the ABC transmembrane type-1 domain. 5 helical membrane passes run 17-37 (LASL…WWLA), 47-67 (IGAV…FYLL), 88-108 (LPFT…PFVV), 150-170 (ITAA…VLMI), and 197-217 (AHWL…ALYS).

It belongs to the binding-protein-dependent transport system permease family. CysTW subfamily.

It is found in the cell inner membrane. Functionally, part of the binding-protein-dependent transport system for molybdenum; probably responsible for the translocation of the substrate across the membrane. The polypeptide is Molybdenum transport system permease protein ModB (modB) (Azotobacter vinelandii).